Consider the following 105-residue polypeptide: Large ribosomal subunit protein uL24 (105 aa).

This sequence belongs to the universal ribosomal protein uL24 family. In terms of assembly, part of the 50S ribosomal subunit.

In terms of biological role, one of two assembly initiator proteins, it binds directly to the 5'-end of the 23S rRNA, where it nucleates assembly of the 50S subunit. One of the proteins that surrounds the polypeptide exit tunnel on the outside of the subunit. The chain is Large ribosomal subunit protein uL24 from Marinomonas sp. (strain MWYL1).